Here is a 152-residue protein sequence, read N- to C-terminus: Ubiquitin-conjugating enzyme E2 N (152 aa).

One can recognise a UBC core domain in the interval 3–149; that stretch reads GLPRRIIKET…ARAWTRLYAM (147 aa). Lysine 82 carries the post-translational modification N6-acetyllysine. Cysteine 87 serves as the catalytic Glycyl thioester intermediate. Lysine 92 is covalently cross-linked (Glycyl lysine isopeptide (Lys-Gly) (interchain with G-Cter in ISG15)).

This sequence belongs to the ubiquitin-conjugating enzyme family. Heterodimer with UBE2V2. Interacts (UBE2V2-UBE2N heterodimer) with the E3 ligase STUB1 (via the U-box domain); the complex has a specific 'Lys-63'-linked polyubiquitination activity. Interacts with RNF8 and RNF168. Interacts with RNF11. Interacts with the E3 ligases, HLTF and SHPRH; the interactions promote the 'Lys-63'-linked polyubiquitination of PCNA upon genotoxic stress and lead to DNA repair. Interacts with ARIH2 (via RING-type 2). Interacts with OTUB1; leading to inhibit E2-conjugating activity. Interacts with RIGI and RNF135; involved in RIGI ubiquitination and activation. In terms of processing, conjugation to ISG15 impairs formation of the thioester bond with ubiquitin but not interaction with UBE2V2.

It carries out the reaction S-ubiquitinyl-[E1 ubiquitin-activating enzyme]-L-cysteine + [E2 ubiquitin-conjugating enzyme]-L-cysteine = [E1 ubiquitin-activating enzyme]-L-cysteine + S-ubiquitinyl-[E2 ubiquitin-conjugating enzyme]-L-cysteine.. It functions in the pathway protein modification; protein ubiquitination. With respect to regulation, activity is inhibited by binding to OTUB1, which prevents 'Lys-63'-linked polyubiquitination. In terms of biological role, the UBE2V1-UBE2N and UBE2V2-UBE2N heterodimers catalyze the synthesis of non-canonical 'Lys-63'-linked polyubiquitin chains. This type of polyubiquitination does not lead to protein degradation by the proteasome. Mediates transcriptional activation of target genes. Plays a role in the control of progress through the cell cycle and differentiation. Plays a role in the error-free DNA repair pathway and contributes to the survival of cells after DNA damage. Acts together with the E3 ligases, HLTF and SHPRH, in the 'Lys-63'-linked poly-ubiquitination of PCNA upon genotoxic stress, which is required for DNA repair. Appears to act together with E3 ligase RNF5 in the 'Lys-63'-linked polyubiquitination of JKAMP thereby regulating JKAMP function by decreasing its association with components of the proteasome and ERAD. Promotes TRIM5 capsid-specific restriction activity and the UBE2V1-UBE2N heterodimer acts in concert with TRIM5 to generate 'Lys-63'-linked polyubiquitin chains which activate the MAP3K7/TAK1 complex which in turn results in the induction and expression of NF-kappa-B and MAPK-responsive inflammatory genes. Together with RNF135 and UB2V1, catalyzes the viral RNA-dependent 'Lys-63'-linked polyubiquitination of RIGI to activate the downstream signaling pathway that leads to interferon beta production. UBE2V1-UBE2N together with TRAF3IP2 E3 ubiquitin ligase mediate 'Lys-63'-linked polyubiquitination of TRAF6, a component of IL17A-mediated signaling pathway. The polypeptide is Ubiquitin-conjugating enzyme E2 N (UBE2N) (Macaca fascicularis (Crab-eating macaque)).